The primary structure comprises 197 residues: Nucleoside triphosphate pyrophosphatase (197 aa).

Catalysis depends on Asp-75, which acts as the Proton acceptor.

The protein belongs to the Maf family. A divalent metal cation serves as cofactor.

It is found in the cytoplasm. It catalyses the reaction a ribonucleoside 5'-triphosphate + H2O = a ribonucleoside 5'-phosphate + diphosphate + H(+). The catalysed reaction is a 2'-deoxyribonucleoside 5'-triphosphate + H2O = a 2'-deoxyribonucleoside 5'-phosphate + diphosphate + H(+). Functionally, nucleoside triphosphate pyrophosphatase. May have a dual role in cell division arrest and in preventing the incorporation of modified nucleotides into cellular nucleic acids. This chain is Nucleoside triphosphate pyrophosphatase, found in Haemophilus ducreyi (strain 35000HP / ATCC 700724).